The sequence spans 273 residues: Phosphate import ATP-binding protein PstB (273 aa).

The ABC transporter domain occupies 27-268 (VTVRDLNFYY…PSDRRTQDYI (242 aa)). Residue 59–66 (GPSGCGKS) coordinates ATP.

This sequence belongs to the ABC transporter superfamily. Phosphate importer (TC 3.A.1.7) family. As to quaternary structure, the complex is composed of two ATP-binding proteins (PstB), two transmembrane proteins (PstC and PstA) and a solute-binding protein (PstS).

It is found in the cell inner membrane. The catalysed reaction is phosphate(out) + ATP + H2O = ADP + 2 phosphate(in) + H(+). Part of the ABC transporter complex PstSACB involved in phosphate import. Responsible for energy coupling to the transport system. This Rhodopseudomonas palustris (strain ATCC BAA-98 / CGA009) protein is Phosphate import ATP-binding protein PstB.